The chain runs to 329 residues: Cytosolic arginine sensor for mTORC1 subunit 1 (329 aa).

Position 14 is a phosphoserine (serine 14). ACT domains are found at residues 72-138 and 260-321; these read AEAT…HTLA and GELW…EVLQ. L-arginine is bound by residues 111–112, glycine 274, 280–281, and 300–304; these read SV, IV, and TFNFD.

Belongs to the GATS family. Forms homodimers and heterodimers with CASTOR2. Interacts with the GATOR2 complex which is composed of MIOS, SEC13, SEH1L, WDR24 and WDR59; the interaction is negatively regulated by arginine. Interacts with TM4SF5; the interaction is positively regulated by leucine and is negatively regulated by arginine. Phosphorylation at Ser-14 by AKT1, promoting the interaction between CASTOR1 and RNF167. In terms of processing, ubiquitinated by RNF167 via 'Lys-29'-polyubiquitination, leading to its degradation, releasing the GATOR2 complex. Ubiquitination by RNF167 is promoted by phosphorylation at Ser-14 by AKT1.

The protein localises to the cytoplasm. Its subcellular location is the cytosol. In terms of biological role, functions as an intracellular arginine sensor within the amino acid-sensing branch of the TORC1 signaling pathway. As a homodimer or a heterodimer with CASTOR2, binds and inhibits the GATOR subcomplex GATOR2 and thereby mTORC1. Binding of arginine to CASTOR1 allosterically disrupts the interaction of CASTOR1-containing dimers with GATOR2 which can in turn activate mTORC1 and the TORC1 signaling pathway. The protein is Cytosolic arginine sensor for mTORC1 subunit 1 of Pongo abelii (Sumatran orangutan).